The primary structure comprises 282 residues: Pantothenate synthetase (282 aa).

An ATP-binding site is contributed by 30-37 (MGYLHEGH). Residue H37 is the Proton donor of the active site. Q61 lines the (R)-pantoate pocket. A beta-alanine-binding site is contributed by Q61. 147 to 150 (GMKD) is an ATP binding site. Q153 is a (R)-pantoate binding site. ATP is bound by residues V176 and 184–187 (KSSR).

This sequence belongs to the pantothenate synthetase family. Homodimer.

It localises to the cytoplasm. The catalysed reaction is (R)-pantoate + beta-alanine + ATP = (R)-pantothenate + AMP + diphosphate + H(+). Its pathway is cofactor biosynthesis; (R)-pantothenate biosynthesis; (R)-pantothenate from (R)-pantoate and beta-alanine: step 1/1. Functionally, catalyzes the condensation of pantoate with beta-alanine in an ATP-dependent reaction via a pantoyl-adenylate intermediate. In Bacillus anthracis (strain A0248), this protein is Pantothenate synthetase.